The primary structure comprises 126 residues: Phosphoribosyl-AMP cyclohydrolase (126 aa).

Position 77 (aspartate 77) interacts with Mg(2+). Position 78 (cysteine 78) interacts with Zn(2+). Residues aspartate 79 and aspartate 81 each contribute to the Mg(2+) site. 2 residues coordinate Zn(2+): cysteine 95 and cysteine 102.

It belongs to the PRA-CH family. In terms of assembly, homodimer. Mg(2+) is required as a cofactor. The cofactor is Zn(2+).

It is found in the cytoplasm. The catalysed reaction is 1-(5-phospho-beta-D-ribosyl)-5'-AMP + H2O = 1-(5-phospho-beta-D-ribosyl)-5-[(5-phospho-beta-D-ribosylamino)methylideneamino]imidazole-4-carboxamide. It participates in amino-acid biosynthesis; L-histidine biosynthesis; L-histidine from 5-phospho-alpha-D-ribose 1-diphosphate: step 3/9. Catalyzes the hydrolysis of the adenine ring of phosphoribosyl-AMP. In Cellvibrio japonicus (strain Ueda107) (Pseudomonas fluorescens subsp. cellulosa), this protein is Phosphoribosyl-AMP cyclohydrolase.